The following is a 1280-amino-acid chain: MAQSKRHMYNRTPSGSRMSTEASARPLRVGSRVEVIGKGHRGTVAYVGATLFATGKWVGVILDEAKGKNDGTVQGRKYFTCDEGHGIFVRQSQIQVFEDGADTTSPETPDSSASKILKREGADAAAKTSKLRGLKPKKAPTARKTTTRRPKPTRPASTGVAGPSSSLGPSGSASAGELSSSEPSTPAQTPLAAPIIPTPALTSPGAAPPLPSPSKEEEGLRDQVRDLEEKLETLRLKRSEDKAKLKELEKHKIQLEQVQEWKSKMQEQQADLQRRLKEAKEAKEALEAKERYMEEMADTADAIEMATLDKEMAEERAESLQQEVEALKERVDELTTDLEILKAEIEEKGSDGAASSYQLKQLEEQNARLKDALVRMRDLSSSEKQEHVKLQKLMEKKNQELEVVRQQRERLQEELSQAESTIDELKEQVDAALGAEEMVEMLTDRNLNLEEKVRELRETVGDLEAMNEMNDELQENARETELELREQLDMAGARVREAQKRVEAAQETVADYQQTIKKYRQLTAHLQDVNRELTNQQEASVERQQQPPPETFDFKIKFAETKAHAKAIEMELRQMEVAQANRHMSLLTAFMPDSFLRPGGDHDCVLVLLLMPRLICKAELIRKQAQEKFDLSENCSERPGLRGAAGEQLSFAAGLVYSLSLLQATLHRYEHALSQCSVDVYKKVGSLYPEMSAHERSLDFLIELLHKDQLDETVNVEPLTKAIKYYQHLYSIHLAEQPEESTMQLADHIKFTQSALDCMSVEVGRLRAFLQGGQEATDIALLLRDLETSCSDIRQFCKKIRRRMPGTDAPGIPAALAFGSQVSDTLLDCRKHLTWVVAVLQEVAAAAAQLIAPLAENEGLPVAALEELAFKASEQIYGSPSSSPYECLRQSCSILISTMNKLATAMQEGEYDAERPPSKPPPVEPWPAALRAEITDAEGLGLKLEDRETVIKELKKSLKIKGEELSEANVRLSLLEKKLDSAAKDADERIEKVQTRLEETQTLLRKKEKEFEETMDALQADIDQLEAEKTELKQRLNSQSKRTIEGLRGPPPSGIATLVSGIAGEEQQRGGTPGQAPGALPGPGPVKDSPLLLQQISAMRLHISQLQHENSILRGAQMKASLAALPPLHVAKFSLPPHEGPGGNLLSGALYRKTSQLLEKLNQLSTYTHVVDITRSSPACKSPSAQLMEQVAQLKSLSDTIEKLKDEVLKETVTQRPGATVPTDFATFPSSAFLRAKEEQQDDTVYMGKVTFSCAAGLGQRHRLVLTQEQLHQLHGRLIS.

The interval M1–P26 is disordered. The span at R11 to A22 shows a compositional bias: polar residues. The 43-residue stretch at G48 to R90 folds into the CAP-Gly domain. The segment at D99 to Q223 is disordered. Polar residues predominate over residues D102–S114. A phosphothreonine mark is found at T108, T145, T146, and T147. Residues S129–P152 are compositionally biased toward basic residues. Residues A161–G205 show a composition bias toward low complexity. Residue S179 is modified to Phosphoserine; by PLK1. A Phosphoserine; by CDK1 modification is found at S212. Residues S214–Q223 show a composition bias toward basic and acidic residues. Coiled-coil stretches lie at residues S214–Q513 and L942–R1048. The interaction with HPS6 stretch occupies residues E910–S1280. The interval G1064–S1089 is disordered. Positions S1184 to V1213 form a coiled coil.

It belongs to the dynactin 150 kDa subunit family. As to quaternary structure, monomer and homodimer. Subunit of dynactin, a multiprotein complex part of a tripartite complex with dynein and a adapter, such as BICDL1, BICD2 or HOOK3. The dynactin complex is built around ACTR1A/ACTB filament and consists of an actin-related filament composed of a shoulder domain, a pointed end and a barbed end. Its length is defined by its flexible shoulder domain. The soulder is composed of 2 DCTN1 subunits, 4 DCTN2 and 2 DCTN3. DCTN1/p150(glued) binds directly to microtubules and to cytoplasmic dynein. The 4 DCNT2 (via N-terminus) bind the ACTR1A filament and act as molecular rulers to determine the length. The pointed end is important for binding dynein-dynactin cargo adapters. Consists of 4 subunits: ACTR10, DCNT4, DCTN5 and DCTN6. The barbed end is composed of a CAPZA1:CAPZB heterodimers, which binds ACTR1A/ACTB filament and dynactin and stabilizes dynactin. Interacts with the C-terminus of MAPRE1, MAPRE2 and MAPRE3. Interacts (via C-terminus) with SNX6. Interacts with CLN3, DYNAP, ECPAS and FBXL5. Interacts with MISP; this interaction regulates its distribution at the cell cortex. Interacts with CEP131. Interacts with CEP126. Interacts with CLIP1. Interacts with dynein intermediate chain and dynein heavy chain. Interacts with PLK1 (via POLO-box domain). Interacts with TBCB. Binds preferentially to tyrosinated microtubules than to detyrosinated microtubules. Interacts with PARD6A. Interacts with HPS6. Interacts with KIF3A. Interacts with BICD2. Interacts with DST (isoform 9). Interacts with DST (isoform 1). Identified in a complex with MREG and RILP. Interacts with BCCIP (isoform 2/alpha). Interacts with DCDC1. Interacts with AKNA. Interacts with DYNC1I2. Interacts with RUFY3 and RUFY4. Ubiquitinated by a SCF complex containing FBXL5, leading to its degradation by the proteasome. In terms of processing, phosphorylation by SLK at Thr-145, Thr-146 and Thr-147 targets DCTN1 to the centrosome. It is uncertain if SLK phosphorylates all three threonines or one or two of them. PLK1-mediated phosphorylation at Ser-179 is essential for its localization in the nuclear envelope and promotes its dissociation from microtubules during early mitosis and positively regulates nuclear envelope breakdown during prophase. Ubiquitous with a high level expression observed in the brain (at protein level).

Its subcellular location is the cytoplasm. It localises to the cytoskeleton. The protein resides in the microtubule organizing center. It is found in the centrosome. The protein localises to the centriole. Its subcellular location is the spindle. It localises to the nucleus envelope. The protein resides in the cell cortex. Functionally, part of the dynactin complex that activates the molecular motor dynein for ultra-processive transport along microtubules. Plays a key role in dynein-mediated retrograde transport of vesicles and organelles along microtubules by recruiting and tethering dynein to microtubules. Binds to both dynein and microtubules providing a link between specific cargos, microtubules and dynein. Essential for targeting dynein to microtubule plus ends, recruiting dynein to membranous cargos and enhancing dynein processivity (the ability to move along a microtubule for a long distance without falling off the track). Can also act as a brake to slow the dynein motor during motility along the microtubule. Can regulate microtubule stability by promoting microtubule formation, nucleation and polymerization and by inhibiting microtubule catastrophe in neurons. Inhibits microtubule catastrophe by binding both to microtubules and to tubulin, leading to enhanced microtubule stability along the axon. Plays a role in metaphase spindle orientation. Plays a role in centriole cohesion and subdistal appendage organization and function. Its recruitment to the centriole in a KIF3A-dependent manner is essential for the maintenance of centriole cohesion and the formation of subdistal appendage. Also required for microtubule anchoring at the mother centriole. Plays a role in primary cilia formation. This chain is Dynactin subunit 1 (Dctn1), found in Rattus norvegicus (Rat).